A 248-amino-acid polypeptide reads, in one-letter code: MDQRQRRILGQPLSIPTSQPKQKRTSMISFFSKVSWKLRFQKREPLKNVFFILAERARDPSAKKRHMAMRNLGTMAYEAPDKVRKYKKIVLDLLVYGLYDPVNLEVIHESMKTLTVVLGKIQGKGLGSFFIDITLQTRTLLDDENDSLRYSAFVLFGQLAAFAGRKWKKFFTSQVKQTRDSLLIHLQDRNPQVAKACKTTFQACSPYLKLKEEYSFQSEEDQRNTKLYQQLSHYHPEILQFFYANKIL.

Residues Met1–Lys21 are disordered. Residues Ser128 to Ala163 form an HEAT repeat.

In terms of tissue distribution, ubiquitous.

It is found in the nucleus. The protein localises to the nucleolus. This chain is Protein maestro (MRO), found in Homo sapiens (Human).